The following is a 242-amino-acid chain: Ubiquinone biosynthesis O-methyltransferase (242 aa).

The S-adenosyl-L-methionine site is built by Arg-44, Gly-64, Asp-85, and Met-129.

It belongs to the methyltransferase superfamily. UbiG/COQ3 family.

It catalyses the reaction a 3-demethylubiquinol + S-adenosyl-L-methionine = a ubiquinol + S-adenosyl-L-homocysteine + H(+). The enzyme catalyses a 3-(all-trans-polyprenyl)benzene-1,2-diol + S-adenosyl-L-methionine = a 2-methoxy-6-(all-trans-polyprenyl)phenol + S-adenosyl-L-homocysteine + H(+). It functions in the pathway cofactor biosynthesis; ubiquinone biosynthesis. Its function is as follows. O-methyltransferase that catalyzes the 2 O-methylation steps in the ubiquinone biosynthetic pathway. This chain is Ubiquinone biosynthesis O-methyltransferase, found in Klebsiella pneumoniae (strain 342).